The primary structure comprises 237 residues: UPF0502 protein RB6530 (237 aa).

Polar residues predominate over residues 187–202 (ASSAAPSQAESGSTSP). Residues 187-211 (ASSAAPSQAESGSTSPAKAANDDRI) are disordered.

This sequence belongs to the UPF0502 family.

This Rhodopirellula baltica (strain DSM 10527 / NCIMB 13988 / SH1) protein is UPF0502 protein RB6530.